Here is a 264-residue protein sequence, read N- to C-terminus: Pro-opiomelanocortin (264 aa).

Positions 1-26 are cleaved as a signal peptide; it reads MPRSCCSRSGALLLALLLQASMEVRG. F87 is modified (phenylalanine amide). 2 disordered regions span residues 88 to 204 and 219 to 238; these read GRRN…DLEH and RMEH…GGFM. N91 carries an N-linked (GlcNAc...) asparagine glycan. Composition is skewed to basic and acidic residues over residues 99–122 and 130–142; these read QKRE…EPRG and REGK…EHFR. E131 carries the glutamic acid 1-amide modification. N-acetylserine; in Corticotropin is present on S135. At V147 the chain carries Valine amide. S165 is modified (phosphoserine). Over residues 172–186 the composition is skewed to basic and acidic residues; it reads EFKRELTGQRPRAGD. Residues 189 to 199 show a composition bias toward low complexity; that stretch reads DGPADDGAGPR. Over residues 219 to 234 the composition is skewed to basic and acidic residues; it reads RMEHFRWGSPPKDKRY.

Belongs to the POMC family. In terms of processing, specific enzymatic cleavages at paired basic residues yield the different active peptides. As to expression, ACTH and MSH are produced by the pituitary gland.

It is found in the secreted. Its function is as follows. Stimulates the adrenal glands to release cortisol. Anorexigenic peptide. Increases the pigmentation of skin by increasing melanin production in melanocytes. Functionally, increases the pigmentation of skin by increasing melanin production in melanocytes. In terms of biological role, endogenous orexigenic opiate. Its function is as follows. Endogenous opiate. The protein is Pro-opiomelanocortin (POMC) of Macaca nemestrina (Pig-tailed macaque).